The sequence spans 361 residues: Cyclic AMP receptor-like protein C (361 aa).

At 1–18 (MGIEESQICNPSDREFLS) the chain is on the extracellular side. The helical transmembrane segment at 19 to 39 (VDILNIVTSSLSLMGSALTII) threads the bilayer. Topologically, residues 40-113 (SYIWKKVRRH…HGTYKQPTSK (74 aa)) are cytoplasmic. The chain crosses the membrane as a helical span at residues 114-134 (LPLLIFMLSIADFFTSFFIII). Residues 135-166 (SQSYLINNSKSYSTPYSPDLKIHFSPCIILRA) lie on the Extracellular side of the membrane. The chain crosses the membrane as a helical span at residues 167–187 (IIQFFFLSTFFWTTCISYYLF). The Cytoplasmic segment spans residues 188–197 (HQLSSPGEEK). The helical transmembrane segment at 198–218 (YLLAIFNVVSWGIPFAISMVI) threads the bilayer. At 219–238 (TMTNSIVVNSDGWCEVAKPM) the chain is on the extracellular side. Residues 239–259 (ELSLWFLPLFLCLLVCSIYYF) traverse the membrane as a helical segment. Over 260–292 (RLRRLFRSKFEYRLQINDRLKQLDSTISRRLTL) the chain is Cytoplasmic. Residues 293 to 313 (YIVVFVICWLPDVIQHFISFF) form a helical membrane-spanning segment. Topologically, residues 314 to 318 (SKCTF) are extracellular. A helical transmembrane segment spans residues 319 to 339 (FPLLILQNILTPSQGFWNFWI). Topologically, residues 340–361 (YSYTNKIARFTPSNDENKRLLQ) are cytoplasmic.

This sequence belongs to the G-protein coupled receptor 5 family.

The protein localises to the membrane. Its function is as follows. Receptor for cAMP. The chain is Cyclic AMP receptor-like protein C (crlC) from Dictyostelium discoideum (Social amoeba).